The primary structure comprises 246 residues: MyoD family inhibitor domain-containing protein (246 aa).

2 disordered regions span residues 1–93 (MSQE…EEET) and 134–164 (KIQS…ASPE). Residues 1–170 (MSQEREPFSP…ASPEDGCVHC (170 aa)) are Extracellular-facing. Residues 63-87 (EDNSNSQPIKAQPQRLPQPNTSALE) are compositionally biased toward polar residues. Positions 74–246 (QPQRLPQPNT…MECCGICFPS (173 aa)) constitute an MDFI domain. Residues 171–188 (ILTCLFCEFLTLCNIVVG) traverse the membrane as a helical segment. Topologically, residues 189–246 (QASCGICTSEACCCCCTEEMGDDCNCPCDMDCGIMDACCESSDCLEICMECCGICFPS) are cytoplasmic.

It belongs to the MDFI family. As to expression, expressed broadly at a low level in the early embryo.

It is found in the cytoplasm. The protein localises to the cell membrane. It localises to the secreted. Required to control the activity of various transcription factors through their sequestration in the cytoplasm. Retains nuclear Zic proteins in the cytoplasm and inhibits their transcriptional activation. Required for dorsoanterior development. Necessary for siamois to activate downstream target genes, including gsc, during execution of the dorsal organizer program. Also regulates the transcriptional activity of TCF7L1/TCF3 by interacting directly with TCF7L1/TCF3 and preventing it from binding DNA. Involved in the development of lymphatic vessel valves. It is required to promote lymphatic endothelial cell migration, in a process that involves down-regulation of integrin beta 1 activation and control of cell adhesion to the extracellular matrix. In Xenopus laevis (African clawed frog), this protein is MyoD family inhibitor domain-containing protein.